The sequence spans 203 residues: High frequency lysogenization protein HflD homolog (203 aa).

The protein belongs to the HflD family.

The protein localises to the cytoplasm. It is found in the cell inner membrane. The polypeptide is High frequency lysogenization protein HflD homolog (Aeromonas salmonicida (strain A449)).